Here is a 497-residue protein sequence, read N- to C-terminus: Bifunctional protein GlmU (497 aa).

The interval 1 to 252 (MSQPSARPSA…VWEVEGANDR (252 aa)) is pyrophosphorylase. Residues 14–17 (LAAG), Lys28, Gln86, 91–92 (GT), 115–117 (YGD), Gly154, Glu169, Asn192, and Asn250 each bind UDP-N-acetyl-alpha-D-glucosamine. Residue Asp117 coordinates Mg(2+). Asn250 is a Mg(2+) binding site. Positions 253–273 (RQLSDLGRRLNERVLRHWMKE) are linker. The segment at 274–497 (GVTVVDPSST…AGAEGSGAQG (224 aa)) is N-acetyltransferase. UDP-N-acetyl-alpha-D-glucosamine-binding residues include Arg355 and Lys373. The active-site Proton acceptor is the His385. Residues Tyr388 and Asn399 each coordinate UDP-N-acetyl-alpha-D-glucosamine. Residues 408–409 (NY), Ser427, and Ala445 contribute to the acetyl-CoA site. The tract at residues 473 to 497 (PAKRPGTSSAEAARAAGAEGSGAQG) is disordered. Residues 480–490 (SSAEAARAAGA) show a composition bias toward low complexity.

The protein in the N-terminal section; belongs to the N-acetylglucosamine-1-phosphate uridyltransferase family. It in the C-terminal section; belongs to the transferase hexapeptide repeat family. As to quaternary structure, homotrimer. Requires Mg(2+) as cofactor.

The protein localises to the cytoplasm. The catalysed reaction is alpha-D-glucosamine 1-phosphate + acetyl-CoA = N-acetyl-alpha-D-glucosamine 1-phosphate + CoA + H(+). It catalyses the reaction N-acetyl-alpha-D-glucosamine 1-phosphate + UTP + H(+) = UDP-N-acetyl-alpha-D-glucosamine + diphosphate. The protein operates within nucleotide-sugar biosynthesis; UDP-N-acetyl-alpha-D-glucosamine biosynthesis; N-acetyl-alpha-D-glucosamine 1-phosphate from alpha-D-glucosamine 6-phosphate (route II): step 2/2. Its pathway is nucleotide-sugar biosynthesis; UDP-N-acetyl-alpha-D-glucosamine biosynthesis; UDP-N-acetyl-alpha-D-glucosamine from N-acetyl-alpha-D-glucosamine 1-phosphate: step 1/1. It functions in the pathway bacterial outer membrane biogenesis; LPS lipid A biosynthesis. Its function is as follows. Catalyzes the last two sequential reactions in the de novo biosynthetic pathway for UDP-N-acetylglucosamine (UDP-GlcNAc). The C-terminal domain catalyzes the transfer of acetyl group from acetyl coenzyme A to glucosamine-1-phosphate (GlcN-1-P) to produce N-acetylglucosamine-1-phosphate (GlcNAc-1-P), which is converted into UDP-GlcNAc by the transfer of uridine 5-monophosphate (from uridine 5-triphosphate), a reaction catalyzed by the N-terminal domain. This is Bifunctional protein GlmU from Micrococcus luteus (strain ATCC 4698 / DSM 20030 / JCM 1464 / CCM 169 / CCUG 5858 / IAM 1056 / NBRC 3333 / NCIMB 9278 / NCTC 2665 / VKM Ac-2230) (Micrococcus lysodeikticus).